The chain runs to 142 residues: MAP3K7 C-terminal-like protein (142 aa).

In terms of tissue distribution, ubiquitous.

The chain is MAP3K7 C-terminal-like protein (Map3k7cl) from Mus musculus (Mouse).